A 423-amino-acid polypeptide reads, in one-letter code: Testin (423 aa).

Disordered regions lie at residues 1–21 and 138–169; these read MSATHPTRLGTRTKESNACAS and EKQPVAGSEGAQYRKKQLAKQLPAHDQDPSKC. A PET domain is found at 97–204; that stretch reads MILTNPVAAK…GDVKFPSEMN (108 aa). The segment covering 160 to 169 has biased composition (basic and acidic residues); the sequence is PAHDQDPSKC. LIM zinc-binding domains are found at residues 236–299, 301–361, and 364–423; these read YSCY…CDSE, PRCA…NHAV, and QGCH…RMMS.

It belongs to the prickle / espinas / testin family. In terms of assembly, interacts via LIM domain 1 with ZYX. Interacts (via LIM domain 3) with ENAH and VASP. Interacts with ALKBH4, talin, actin, alpha-actinin, GRIP1 and PXN. Interacts (via LIM domain 2) with ACTL7A (via N-terminus). Heterodimer with ACTL7A; the heterodimer interacts with ENAH to form a heterotrimer. In terms of tissue distribution, detected at the acrosome of round spermatids (at protein level). Isoform TES1 transcript is highly expressed in adult testis and detected at low levels in other tissues. Isoform TES2 transcript is highly expressed in testis, kidney and spleen; intermediate in thymus, submaxillary gland and lung; detected at low levels in other tissues.

Its subcellular location is the cytoplasm. It is found in the cell junction. The protein resides in the focal adhesion. Scaffold protein that may play a role in cell adhesion, cell spreading and in the reorganization of the actin cytoskeleton. Plays a role in the regulation of cell proliferation. May act as a tumor suppressor. The polypeptide is Testin (Tes) (Mus musculus (Mouse)).